The sequence spans 488 residues: Glutamyl-tRNA(Gln) amidotransferase subunit A, mitochondrial (488 aa).

Residues Lys62 and Ser140 each act as charge relay system in the active site. The active-site Acyl-ester intermediate is Ser164. The interval 205–228 is disordered; it reads GHDDNDPTSITPQTRERIQDRLSR. Positions 218-227 are enriched in basic and acidic residues; sequence TRERIQDRLS.

Belongs to the amidase family. GatA subfamily. In terms of assembly, subunit of the heterotrimeric GatCAB amidotransferase (AdT) complex, composed of A, B and C subunits.

It localises to the mitochondrion. The catalysed reaction is L-glutamyl-tRNA(Gln) + L-glutamine + ATP + H2O = L-glutaminyl-tRNA(Gln) + L-glutamate + ADP + phosphate + H(+). In terms of biological role, allows the formation of correctly charged Gln-tRNA(Gln) through the transamidation of misacylated Glu-tRNA(Gln) in the mitochondria. The reaction takes place in the presence of glutamine and ATP through an activated gamma-phospho-Glu-tRNA(Gln). The protein is Glutamyl-tRNA(Gln) amidotransferase subunit A, mitochondrial of Tuber melanosporum (strain Mel28) (Perigord black truffle).